A 95-amino-acid chain; its full sequence is Co-chaperonin GroES (95 aa).

Belongs to the GroES chaperonin family. In terms of assembly, heptamer of 7 subunits arranged in a ring. Interacts with the chaperonin GroEL.

The protein localises to the cytoplasm. In terms of biological role, together with the chaperonin GroEL, plays an essential role in assisting protein folding. The GroEL-GroES system forms a nano-cage that allows encapsulation of the non-native substrate proteins and provides a physical environment optimized to promote and accelerate protein folding. GroES binds to the apical surface of the GroEL ring, thereby capping the opening of the GroEL channel. The polypeptide is Co-chaperonin GroES (Nitratidesulfovibrio vulgaris (strain DSM 19637 / Miyazaki F) (Desulfovibrio vulgaris)).